The sequence spans 571 residues: Kinesin light chain (571 aa).

A coiled-coil region spans residues 54-160; that stretch reads LLTSMKTIRK…KKHLEFMNEM (107 aa). A compositionally biased stretch (basic and acidic residues) spans 167-177; it reads EAQVNEEKESE. A disordered region spans residues 167 to 210; that stretch reads EAQVNEEKESEQSSLDLGFPDDDDDGGQPEVLSPTQPSAMAQAA. TPR repeat units follow at residues 220–253, 262–295, 304–337, 346–379, 388–421, and 471–504; these read LRTLHNLVIQYASQGRYEVAVPLCKQALEDLEKT, ATMLNILALVYRDQGKYKEAANLLNDALGIREKT, AATLNNLAVLYGKRGKYKDAEPLCKRALVIREKV, AKQLNNLALLCQNQGKYEEVERYYQRALEIYQKE, AKTKNNLASAYLKQGKYKQAEILYKEVLTRAHEK, and TTTLKNLGALYRRQGKYEAAETLEECALRSRKSA. The tract at residues 518-571 is disordered; sequence GSDFSKGQSPKDRKRSNSRDRNRRDSMDSVSYEKSGDGDEHEKSKLHVGTSHKQ. 2 stretches are compositionally biased toward basic and acidic residues: residues 526-544 and 551-562; these read SPKDRKRSNSRDRNRRDSM and KSGDGDEHEKSK.

Belongs to the kinesin light chain family. As to quaternary structure, oligomeric complex composed of two heavy chains and two light chains.

The protein resides in the cytoplasm. It is found in the cytoskeleton. In terms of biological role, kinesin is a microtubule-associated force-producing protein that may play a role in organelle transport. The light chain may function in coupling of cargo to the heavy chain or in the modulation of its ATPase activity. In Doryteuthis pealeii (Longfin inshore squid), this protein is Kinesin light chain.